The chain runs to 66 residues: Large ribosomal subunit protein bL33c (66 aa).

Belongs to the bacterial ribosomal protein bL33 family.

The protein localises to the plastid. It localises to the chloroplast. The polypeptide is Large ribosomal subunit protein bL33c (Angiopteris evecta (Mule's foot fern)).